The sequence spans 312 residues: Flavonol 3-sulfotransferase (312 aa).

59–64 is a 3'-phosphoadenylyl sulfate binding site; it reads KSGTTW. The Proton acceptor role is filled by His-119. Residues Arg-141, Ser-149, Tyr-207, and 277 to 279 each bind 3'-phosphoadenylyl sulfate; that span reads RKG.

This sequence belongs to the sulfotransferase 1 family. Highest in shoot tips and lowest in mature leaves and roots.

The protein resides in the cytoplasm. Functionally, sulfotransferase that utilizes 3'-phospho-5'-adenylyl sulfate (PAPS) as sulfonate donor to catalyze the sulfate conjugation of quercetin, rhamnetin and isorhamnetin but not kaempferol. O-sulfation of position 3 of flavonol. May play a role in auxin transport. The chain is Flavonol 3-sulfotransferase from Flaveria bidentis (Coastal plain yellowtops).